The primary structure comprises 725 residues: Catalase-peroxidase 1 (725 aa).

Residues 96-224 (WHSAGSYRLA…LAAVQMGLIY (129 aa)) constitute a cross-link (tryptophyl-tyrosyl-methioninium (Trp-Tyr) (with M-250)). His97 (proton acceptor) is an active-site residue. Positions 224-250 (YVNPEGVDGNPDPLRTAKDVRETFKRM) form a cross-link, tryptophyl-tyrosyl-methioninium (Tyr-Met) (with W-96). His265 contacts heme b.

The protein belongs to the peroxidase family. Peroxidase/catalase subfamily. As to quaternary structure, homodimer or homotetramer. Requires heme b as cofactor. Post-translationally, formation of the three residue Trp-Tyr-Met cross-link is important for the catalase, but not the peroxidase activity of the enzyme.

It catalyses the reaction H2O2 + AH2 = A + 2 H2O. It carries out the reaction 2 H2O2 = O2 + 2 H2O. Its function is as follows. Bifunctional enzyme with both catalase and broad-spectrum peroxidase activity. This Idiomarina loihiensis (strain ATCC BAA-735 / DSM 15497 / L2-TR) protein is Catalase-peroxidase 1.